Consider the following 155-residue polypeptide: RNA pyrophosphohydrolase (155 aa).

In terms of domain architecture, Nudix hydrolase spans 5 to 147 (KYRPNVAAII…KRQVYRQVIA (143 aa)). The short motif at 42-63 (GGIDEGETPLEALHRELLEEIG) is the Nudix box element.

The protein belongs to the Nudix hydrolase family. RppH subfamily. Requires a divalent metal cation as cofactor.

Its function is as follows. Accelerates the degradation of transcripts by removing pyrophosphate from the 5'-end of triphosphorylated RNA, leading to a more labile monophosphorylated state that can stimulate subsequent ribonuclease cleavage. In Helicobacter pylori (strain HPAG1), this protein is RNA pyrophosphohydrolase.